The primary structure comprises 593 residues: Glutamate decarboxylase 1 (593 aa).

Low complexity predominate over residues 1-12; sequence MASSTPSPATSS. Residues 1 to 22 are disordered; it reads MASSTPSPATSSNAGADPNTTN. Serine 77 carries the post-translational modification Phosphoserine. Residue 189–191 coordinates 4-aminobutanoate; sequence QLS. An N6-(pyridoxal phosphate)lysine modification is found at lysine 404. Position 566 (arginine 566) interacts with 4-aminobutanoate.

The protein belongs to the group II decarboxylase family. As to quaternary structure, homodimer. Requires pyridoxal 5'-phosphate as cofactor. Expressed in brain and pancreatic islets.

It carries out the reaction L-glutamate + H(+) = 4-aminobutanoate + CO2. In terms of biological role, catalyzes the synthesis of the inhibitory neurotransmitter gamma-aminobutyric acid (GABA) with pyridoxal 5'-phosphate as cofactor. The polypeptide is Glutamate decarboxylase 1 (Gad1) (Rattus norvegicus (Rat)).